A 224-amino-acid chain; its full sequence is Ribonuclease HII (224 aa).

The RNase H type-2 domain occupies 1 to 210 (MKLGGIDEAG…LKKIEEKLQK (210 aa)). A divalent metal cation contacts are provided by aspartate 7, glutamate 8, and aspartate 105.

This sequence belongs to the RNase HII family. It depends on Mn(2+) as a cofactor. Mg(2+) is required as a cofactor.

It localises to the cytoplasm. The catalysed reaction is Endonucleolytic cleavage to 5'-phosphomonoester.. Endonuclease that specifically degrades the RNA of RNA-DNA hybrids. This is Ribonuclease HII from Thermococcus sibiricus (strain DSM 12597 / MM 739).